Consider the following 601-residue polypeptide: Multidrug and toxin extrusion protein 2 (601 aa).

Residues 1–62 (MNTAFAGFDE…PRGFWDEARA (62 aa)) lie on the Cytoplasmic side of the membrane. Residues 63-83 (LFVLSGPLFLFQVLNFLTYVV) traverse the membrane as a helical segment. Residues 84 to 95 (GTVFCGHLGKVE) are Extracellular-facing. A helical membrane pass occupies residues 96–116 (LASVTLGVAFVNVCGVSVGAG). Residues 117 to 145 (LSSACDTLMSQSFGSPNKKHVGVILQRGS) are Cytoplasmic-facing. A helical transmembrane segment spans residues 146–166 (LILLLCCLPCWALFLNTQHIL). Residues 167 to 182 (LLFRQDPAVSRLTQDY) are Extracellular-facing. Residues 183–203 (AMIFIPGLPAIFLYSLLAKYL) form a helical membrane-spanning segment. The Cytoplasmic segment spans residues 204–212 (QNQGIVWPQ). The helical transmembrane segment at 213-233 (VLSGVVGNCVNGVANYALVSV) threads the bilayer. The Extracellular segment spans residues 234–241 (LNLGVRGS). The chain crosses the membrane as a helical span at residues 242–262 (AYANTISQFVQAAFLFLHIVL). At 263–281 (KKLHLETWEGWSSQCLRDW) the chain is on the cytoplasmic side. A helical membrane pass occupies residues 282–301 (GPFLSLAIPSMLMMCVEWWA). Topologically, residues 302-320 (YEIGSFLMGLLGVVDLSGQ) are extracellular. The chain crosses the membrane as a helical span at residues 321–341 (AIIYEVATVVYMIPMGLGMAV). The Cytoplasmic portion of the chain corresponds to 342-361 (CVRVGTALGAADTLQAKRSA). A helical transmembrane segment spans residues 362–382 (VSGLLCTAGTSLVVGTLLGLL). Residues 383–402 (NSQLGYIFTSDEEVIALVNQ) are Extracellular-facing. Residues 403–423 (VLPIYIVFQLVEAVCCVFGGV) traverse the membrane as a helical segment. The Cytoplasmic portion of the chain corresponds to 424-437 (LRGTGKQAFGAIVN). A helical membrane pass occupies residues 438 to 458 (AIMYYIVGLPLGIVLTFVVGM). Arg459 is a topological domain (extracellular). The chain crosses the membrane as a helical span at residues 460 to 480 (IMGLWLGMLTCIFLAAVTFVV). The Cytoplasmic portion of the chain corresponds to 481–577 (YAVQLDWKLA…LSVRQLLFRR (97 aa)). Residues 578 to 598 (GAALAASVAVLMAGLLVRVLT) traverse the membrane as a helical segment. Topologically, residues 599-601 (TGY) are extracellular.

Belongs to the multi antimicrobial extrusion (MATE) (TC 2.A.66.1) family. In terms of tissue distribution, expressed in renal cortical tissues.

Its subcellular location is the cell membrane. The protein resides in the apical cell membrane. It catalyses the reaction thiamine(out) + H(+)(in) = thiamine(in) + H(+)(out). It carries out the reaction estrone 3-sulfate(in) + H(+)(out) = estrone 3-sulfate(out) + H(+)(in). The catalysed reaction is creatinine(in) + H(+)(out) = creatinine(out) + H(+)(in). Functionally, multidrug efflux pump that functions as a H(+)/organic cation antiporter. Mediates the efflux of cationic compounds, such as the model cations, tetraethylammonium (TEA) and 1-methyl-4-phenylpyridinium (MPP+), the platinum-based drug oxaliplatin or weak bases that are positively charged at physiological pH, cimetidine or the antidiabetic drug metformin. Mediates the efflux of the endogenous compounds creatinine, thiamine and estrone-3-sulfate. Plays a physiological role in the excretion of drugs, toxins and endogenous metabolites through the kidney. The sequence is that of Multidrug and toxin extrusion protein 2 (SLC47A2) from Oryctolagus cuniculus (Rabbit).